A 315-amino-acid chain; its full sequence is DNA-directed RNA polymerase subunit alpha (315 aa).

The segment at 1–228 is alpha N-terminal domain (alpha-NTD); that stretch reads MLEIEKPKIE…EHFKLFMTLT (228 aa). An alpha C-terminal domain (alpha-CTD) region spans residues 245 to 315; the sequence is KEKVLEMTIE…LGLSLKLNDE (71 aa).

Belongs to the RNA polymerase alpha chain family. As to quaternary structure, homodimer. The RNAP catalytic core consists of 2 alpha, 1 beta, 1 beta' and 1 omega subunit. When a sigma factor is associated with the core the holoenzyme is formed, which can initiate transcription.

It catalyses the reaction RNA(n) + a ribonucleoside 5'-triphosphate = RNA(n+1) + diphosphate. Functionally, DNA-dependent RNA polymerase catalyzes the transcription of DNA into RNA using the four ribonucleoside triphosphates as substrates. In Clostridium acetobutylicum (strain ATCC 824 / DSM 792 / JCM 1419 / IAM 19013 / LMG 5710 / NBRC 13948 / NRRL B-527 / VKM B-1787 / 2291 / W), this protein is DNA-directed RNA polymerase subunit alpha.